The primary structure comprises 1023 residues: 2-oxoglutarate dehydrogenase complex component E1 (1023 aa).

The transit peptide at 1–40 (MFHLRTCAAKLRPLTASQTVKTFSQNKPAAIRTFQQIRCY) directs the protein to the mitochondrion. An N6-succinyllysine modification is found at lysine 74. Serine 100 is modified (phosphoserine). Histidine 143, aspartate 156, and aspartate 158 together coordinate Ca(2+). Arginine 312 serves as a coordination point for thiamine diphosphate. Lysine 401 bears the N6-acetyllysine mark. Residues aspartate 411, asparagine 444, and isoleucine 446 each contribute to the thiamine diphosphate site. 3 residues coordinate Mg(2+): aspartate 411, asparagine 444, and isoleucine 446. Lysine 534 is covalently cross-linked (Glycyl lysine isopeptide (Lys-Gly) (interchain with G-Cter in ubiquitin)). Lysine 564 is subject to N6-succinyllysine. Residue glutamine 676 participates in thiamine diphosphate binding. Residues 933 to 939 (LSPFPFD) are recognized by alloreactive CD8 cytotoxic T-lymphocytes in association with a class I MHC protein. Lysine 970 carries the N6-acetyllysine modification.

This sequence belongs to the alpha-ketoglutarate dehydrogenase family. Homodimer. The 2-oxoglutarate dehydrogenase complex is composed of OGDH (2-oxoglutarate dehydrogenase; E1), DLST (dihydrolipoamide succinyltransferase; E2), DLD (dihydrolipoamide dehydrogenase; E3) and the assembly factor KGD4. It contains multiple copies of the three enzymatic components (E1, E2 and E3). In the nucleus, the 2-oxoglutarate dehydrogenase complex associates with KAT2A. Interacts with ABHD11; this interaction maintains the functional lipoylation of the 2-oxoglutarate dehydrogenase complex. Thiamine diphosphate serves as cofactor. Mg(2+) is required as a cofactor.

It localises to the mitochondrion. Its subcellular location is the nucleus. The enzyme catalyses N(6)-[(R)-lipoyl]-L-lysyl-[protein] + 2-oxoglutarate + H(+) = N(6)-[(R)-S(8)-succinyldihydrolipoyl]-L-lysyl-[protein] + CO2. Calcium ions and ADP stimulate, whereas ATP and NADH reduce catalytic activity. Its function is as follows. 2-oxoglutarate dehydrogenase (E1o) component of the 2-oxoglutarate dehydrogenase complex (OGDHC). Participates in the first step, rate limiting for the overall conversion of 2-oxoglutarate to succinyl-CoA and CO(2) catalyzed by the whole OGDHC. Catalyzes the irreversible decarboxylation of 2-oxoglutarate (alpha-ketoglutarate) via the thiamine diphosphate (ThDP) cofactor and subsequent transfer of the decarboxylated acyl intermediate on an oxidized dihydrolipoyl group that is covalently amidated to the E2 enzyme (dihydrolipoyllysine-residue succinyltransferase or DLST). Plays a key role in the Krebs (citric acid) cycle, which is a common pathway for oxidation of fuel molecules, including carbohydrates, fatty acids, and amino acids. Can catalyze the decarboxylation of 2-oxoadipate in vitro, but at a much lower rate than 2-oxoglutarate. Mainly active in the mitochondrion. A fraction of the 2-oxoglutarate dehydrogenase complex also localizes in the nucleus and is required for lysine succinylation of histones: associates with KAT2A on chromatin and provides succinyl-CoA to histone succinyltransferase KAT2A. The polypeptide is 2-oxoglutarate dehydrogenase complex component E1 (Mus musculus (Mouse)).